The sequence spans 421 residues: Conjugal transfer protein TraB (421 aa).

8 helical membrane-spanning segments follow: residues 33–53 (LLIL…ALLL), 103–123 (LLLW…FWPA), 144–164 (LAAA…AHPL), 169–189 (ILFP…LAMM), 193–213 (YWPA…ATWT), 287–307 (TVIA…MVTV), 366–386 (LIVW…VATG), and 388–408 (GWWT…IAWA). The CN hydrolase domain maps to 222-421 (KGVDLEQGQT…GRPVVTAFNT (200 aa)).

Its subcellular location is the cell membrane. Functionally, enhances conjugal transfer of the Ti plasmid. The protein is Conjugal transfer protein TraB (traB) of Agrobacterium fabrum (strain C58 / ATCC 33970) (Agrobacterium tumefaciens (strain C58)).